A 55-amino-acid chain; its full sequence is Putative virulence-regulating protein PA2146 (55 aa).

Residues 1–55 (MAQHQGGKGNFAEDPKRASEAGKKGGQASGGNFKNDPQRASEAGKKGGQRSHGGN) form a disordered region. 2 stretches are compositionally biased toward basic and acidic residues: residues 11-23 (FAED…EAGK) and 36-45 (DPQRASEAGK).

This sequence belongs to the con-10 family.

Its function is as follows. May be involved in the regulation of the production of pyocyanine, one of the major virulence factors secreted by P.aeruginosa, and other virulence factors. This is Putative virulence-regulating protein PA2146 from Pseudomonas aeruginosa (strain ATCC 15692 / DSM 22644 / CIP 104116 / JCM 14847 / LMG 12228 / 1C / PRS 101 / PAO1).